Reading from the N-terminus, the 277-residue chain is Release factor glutamine methyltransferase (277 aa).

Residues 120 to 124 (GTGSG), D143, W171, and N186 contribute to the S-adenosyl-L-methionine site. 186 to 189 (NPPY) contributes to the substrate binding site.

This sequence belongs to the protein N5-glutamine methyltransferase family. PrmC subfamily.

It catalyses the reaction L-glutaminyl-[peptide chain release factor] + S-adenosyl-L-methionine = N(5)-methyl-L-glutaminyl-[peptide chain release factor] + S-adenosyl-L-homocysteine + H(+). Functionally, methylates the class 1 translation termination release factors RF1/PrfA and RF2/PrfB on the glutamine residue of the universally conserved GGQ motif. This Coxiella burnetii (strain RSA 493 / Nine Mile phase I) protein is Release factor glutamine methyltransferase.